The chain runs to 199 residues: Probable nicotinate-nucleotide adenylyltransferase (199 aa).

The protein belongs to the NadD family.

The enzyme catalyses nicotinate beta-D-ribonucleotide + ATP + H(+) = deamido-NAD(+) + diphosphate. It participates in cofactor biosynthesis; NAD(+) biosynthesis; deamido-NAD(+) from nicotinate D-ribonucleotide: step 1/1. In terms of biological role, catalyzes the reversible adenylation of nicotinate mononucleotide (NaMN) to nicotinic acid adenine dinucleotide (NaAD). The chain is Probable nicotinate-nucleotide adenylyltransferase from Chloroherpeton thalassium (strain ATCC 35110 / GB-78).